Consider the following 444-residue polypeptide: Ribulose bisphosphate carboxylase large chain (444 aa).

Residue Lys5 is modified to N6,N6,N6-trimethyllysine. Substrate contacts are provided by Asn114 and Thr164. Lys166 functions as the Proton acceptor in the catalytic mechanism. Position 168 (Lys168) interacts with substrate. Positions 192, 194, and 195 each coordinate Mg(2+). An N6-carboxylysine modification is found at Lys192. His285 acts as the Proton acceptor in catalysis. 3 residues coordinate substrate: Arg286, His318, and Ser370.

This sequence belongs to the RuBisCO large chain family. Type I subfamily. As to quaternary structure, heterohexadecamer of 8 large chains and 8 small chains; disulfide-linked. The disulfide link is formed within the large subunit homodimers. Mg(2+) is required as a cofactor. In terms of processing, the disulfide bond which can form in the large chain dimeric partners within the hexadecamer appears to be associated with oxidative stress and protein turnover.

It localises to the plastid. The protein resides in the chloroplast. The enzyme catalyses 2 (2R)-3-phosphoglycerate + 2 H(+) = D-ribulose 1,5-bisphosphate + CO2 + H2O. The catalysed reaction is D-ribulose 1,5-bisphosphate + O2 = 2-phosphoglycolate + (2R)-3-phosphoglycerate + 2 H(+). In terms of biological role, ruBisCO catalyzes two reactions: the carboxylation of D-ribulose 1,5-bisphosphate, the primary event in carbon dioxide fixation, as well as the oxidative fragmentation of the pentose substrate in the photorespiration process. Both reactions occur simultaneously and in competition at the same active site. This is Ribulose bisphosphate carboxylase large chain from Ginkgo biloba (Ginkgo).